The chain runs to 133 residues: MARVKRGVVAHAKHKKVLKQAEGFYGRRKNTIRAAKAAVDRSKQYAYRDRKNRKRIFRALWIQRINAAVRAEGLTYGRFIDGLSKAGIEIDRKVLSDIAVHESAAFSALVASAKKALEYLRDTTSNAFEGAVK.

Belongs to the bacterial ribosomal protein bL20 family.

In terms of biological role, binds directly to 23S ribosomal RNA and is necessary for the in vitro assembly process of the 50S ribosomal subunit. It is not involved in the protein synthesizing functions of that subunit. The sequence is that of Large ribosomal subunit protein bL20 from Bartonella quintana (strain Toulouse) (Rochalimaea quintana).